We begin with the raw amino-acid sequence, 571 residues long: Glutamate--tRNA ligase (571 aa).

The 'HIGH' region signature appears at 110 to 120; sequence PNPNGPATLGS.

It belongs to the class-I aminoacyl-tRNA synthetase family. Glutamate--tRNA ligase type 2 subfamily.

Its subcellular location is the cytoplasm. The catalysed reaction is tRNA(Glu) + L-glutamate + ATP = L-glutamyl-tRNA(Glu) + AMP + diphosphate. Its function is as follows. Catalyzes the attachment of glutamate to tRNA(Glu) in a two-step reaction: glutamate is first activated by ATP to form Glu-AMP and then transferred to the acceptor end of tRNA(Glu). This is Glutamate--tRNA ligase from Methanosarcina mazei (strain ATCC BAA-159 / DSM 3647 / Goe1 / Go1 / JCM 11833 / OCM 88) (Methanosarcina frisia).